The sequence spans 688 residues: Elongation factor G (688 aa).

In terms of domain architecture, tr-type G spans 8-282; sequence DKFRNFGIMA…GVVDYLPSPL (275 aa). Residues 17 to 24, 81 to 85, and 135 to 138 contribute to the GTP site; these read AHIDAGKT, DTPGH, and NKMD.

Belongs to the TRAFAC class translation factor GTPase superfamily. Classic translation factor GTPase family. EF-G/EF-2 subfamily.

The protein resides in the cytoplasm. In terms of biological role, catalyzes the GTP-dependent ribosomal translocation step during translation elongation. During this step, the ribosome changes from the pre-translocational (PRE) to the post-translocational (POST) state as the newly formed A-site-bound peptidyl-tRNA and P-site-bound deacylated tRNA move to the P and E sites, respectively. Catalyzes the coordinated movement of the two tRNA molecules, the mRNA and conformational changes in the ribosome. The polypeptide is Elongation factor G (Clostridium botulinum (strain Alaska E43 / Type E3)).